Here is an 85-residue protein sequence, read N- to C-terminus: Small ribosomal subunit protein bS20 (85 aa).

It belongs to the bacterial ribosomal protein bS20 family.

In terms of biological role, binds directly to 16S ribosomal RNA. In Borrelia hermsii (strain HS1 / DAH), this protein is Small ribosomal subunit protein bS20.